The primary structure comprises 322 residues: Ribosomal RNA small subunit methyltransferase H (322 aa).

S-adenosyl-L-methionine-binding positions include 43 to 45, D60, F86, D104, and Q111; that span reads GGY.

This sequence belongs to the methyltransferase superfamily. RsmH family.

It is found in the cytoplasm. The enzyme catalyses cytidine(1402) in 16S rRNA + S-adenosyl-L-methionine = N(4)-methylcytidine(1402) in 16S rRNA + S-adenosyl-L-homocysteine + H(+). Functionally, specifically methylates the N4 position of cytidine in position 1402 (C1402) of 16S rRNA. In Caulobacter sp. (strain K31), this protein is Ribosomal RNA small subunit methyltransferase H.